We begin with the raw amino-acid sequence, 438 residues long: Acid phosphatase type 7 (438 aa).

The signal sequence occupies residues 1–26 (MHPLPGYWSCYCLLLLFSLGVQGSLG). Fe cation contacts are provided by Asp-141, Asp-170, and Tyr-173. Asp-170 serves as a coordination point for Zn(2+). Asn-205 lines the Zn(2+) pocket. The N-linked (GlcNAc...) asparagine glycan is linked to Asn-211. The Zn(2+) site is built by His-286 and His-333. Residue His-335 coordinates Fe cation. N-linked (GlcNAc...) asparagine glycans are attached at residues Asn-350 and Asn-404.

It belongs to the metallophosphoesterase superfamily. Purple acid phosphatase family. The cofactor is Fe cation. It depends on Zn(2+) as a cofactor.

It localises to the secreted. It catalyses the reaction a phosphate monoester + H2O = an alcohol + phosphate. The polypeptide is Acid phosphatase type 7 (Homo sapiens (Human)).